A 209-amino-acid chain; its full sequence is MSPIDRLILEFDTALRSVVGGANAQRPTPGSEFASNSGVDAAERKHAAGLMRVNHVGEVCAQALYQSQKLVARNSEIQAMLDYSGQEEMDHLAWCENRLQELGSHTSYLNPLWYAGSFAIGLAAGLAGDKWSLGFVAETEKQVESHLESHLKKLPKEDQRSRAIVDQMRIDEIAHGQAAKNAGGVNLPEPIQKIMHAMSKVMTTTAYKI.

E58, E88, H91, E140, E172, and H175 together coordinate Fe cation.

This sequence belongs to the COQ7 family. Fe cation serves as cofactor.

The protein localises to the cell membrane. It catalyses the reaction a 5-methoxy-2-methyl-3-(all-trans-polyprenyl)benzene-1,4-diol + AH2 + O2 = a 3-demethylubiquinol + A + H2O. It participates in cofactor biosynthesis; ubiquinone biosynthesis. Functionally, catalyzes the hydroxylation of 2-nonaprenyl-3-methyl-6-methoxy-1,4-benzoquinol during ubiquinone biosynthesis. This is 3-demethoxyubiquinol 3-hydroxylase from Polynucleobacter necessarius subsp. necessarius (strain STIR1).